The sequence spans 588 residues: Sentrin-specific protease 2 (588 aa).

A Nuclear localization signal motif is present at residues 28 to 31 (KRRR). At Ser32 the chain carries Phosphoserine. The Nuclear localization signal motif lies at 47–52 (PAKRPR). Residues 157–184 (EGYNRRPSGRRHSKSNPESSLTWKPQEQ) form a disordered region. Over residues 172–184 (NPESSLTWKPQEQ) the composition is skewed to polar residues. The Nuclear export signal signature appears at 316 to 331 (MEPDLSEEVSARLRLG). Ser332 and Ser343 each carry phosphoserine. The interval 394 to 558 (LRITRGDIQT…MFTCKYADYI (165 aa)) is protease. Residues His477 and Asp494 contribute to the active site. Catalysis depends on Cys547, which acts as the Nucleophile.

The protein belongs to the peptidase C48 family. Binds to SUMO2 and SUMO3. Interacts with the C-terminal domain of NUP153 via its N-terminus. Interacts with MTA1. Polyubiquitinated; which leads to proteasomal degradation. As to expression, highly expressed in testis. Detected in brain, heart and thymus.

It localises to the nucleus. It is found in the nuclear pore complex. The protein resides in the nucleus membrane. The protein localises to the cytoplasm. Its subcellular location is the cytoplasmic vesicle. It localises to the PML body. Functionally, protease that catalyzes two essential functions in the SUMO pathway. The first is the hydrolysis of an alpha-linked peptide bond at the C-terminal end of the small ubiquitin-like modifier (SUMO) propeptides, SUMO1, SUMO2 and SUMO3 leading to the mature form of the proteins. The second is the deconjugation of SUMO1, SUMO2 and SUMO3 from targeted proteins, by cleaving an epsilon-linked peptide bond between the C-terminal glycine of the mature SUMO and the lysine epsilon-amino group of the target protein. May down-regulate CTNNB1 levels and thereby modulate the Wnt pathway. Deconjugates SUMO2 from MTA1. Plays a dynamic role in adipogenesis by desumoylating and promoting the stabilization of CEBPB. Acts as a regulator of the cGAS-STING pathway by catalyzing desumoylation of CGAS and STING1 during the late phase of viral infection. In terms of biological role, activates transcription. This Mus musculus (Mouse) protein is Sentrin-specific protease 2 (Senp2).